The following is a 126-amino-acid chain: Holo-[acyl-carrier-protein] synthase (126 aa).

The Mg(2+) site is built by Asp9 and Glu58.

It belongs to the P-Pant transferase superfamily. AcpS family. Mg(2+) serves as cofactor.

It localises to the cytoplasm. It carries out the reaction apo-[ACP] + CoA = holo-[ACP] + adenosine 3',5'-bisphosphate + H(+). In terms of biological role, transfers the 4'-phosphopantetheine moiety from coenzyme A to a Ser of acyl-carrier-protein. In Buchnera aphidicola subsp. Acyrthosiphon pisum (strain APS) (Acyrthosiphon pisum symbiotic bacterium), this protein is Holo-[acyl-carrier-protein] synthase.